Reading from the N-terminus, the 119-residue chain is Beta-2-microglobulin (119 aa).

An N-terminal signal peptide occupies residues 1–20 (MSRSVALAVLALLSLSGLEA). The 90-residue stretch at 25 to 114 (PKIQVYSRHP…VTLSGPRTVK (90 aa)) folds into the Ig-like C1-type domain. Cysteine 45 and cysteine 100 are oxidised to a cystine.

Belongs to the beta-2-microglobulin family. In terms of assembly, heterodimer of an alpha chain and a beta chain. Beta-2-microglobulin is the beta-chain of major histocompatibility complex class I molecules.

It localises to the secreted. Functionally, component of the class I major histocompatibility complex (MHC). Involved in the presentation of peptide antigens to the immune system. This is Beta-2-microglobulin (B2M) from Papio anubis (Olive baboon).